We begin with the raw amino-acid sequence, 112 residues long: MTALSNMKCEACQADAPKVTDEELAELIRMIPDWGVQVRDGVMQLERVYKFKNFKLAMAFTNKLADLAEEEFHHPGIFTEWGKVTVTWWSHSIKGLHKNDFIMAAKTDQLLV.

The protein belongs to the pterin-4-alpha-carbinolamine dehydratase family.

The catalysed reaction is (4aS,6R)-4a-hydroxy-L-erythro-5,6,7,8-tetrahydrobiopterin = (6R)-L-erythro-6,7-dihydrobiopterin + H2O. This is Putative pterin-4-alpha-carbinolamine dehydratase from Shewanella baltica (strain OS223).